Here is a 167-residue protein sequence, read N- to C-terminus: NAD(P)H-quinone oxidoreductase subunit I, chloroplastic (167 aa).

4Fe-4S ferredoxin-type domains are found at residues glycine 55–lysine 84 and leucine 95–glutamate 124. 8 residues coordinate [4Fe-4S] cluster: cysteine 64, cysteine 67, cysteine 70, cysteine 74, cysteine 104, cysteine 107, cysteine 110, and cysteine 114.

The protein belongs to the complex I 23 kDa subunit family. In terms of assembly, NDH is composed of at least 16 different subunits, 5 of which are encoded in the nucleus. Requires [4Fe-4S] cluster as cofactor.

The protein resides in the plastid. The protein localises to the chloroplast thylakoid membrane. The catalysed reaction is a plastoquinone + NADH + (n+1) H(+)(in) = a plastoquinol + NAD(+) + n H(+)(out). The enzyme catalyses a plastoquinone + NADPH + (n+1) H(+)(in) = a plastoquinol + NADP(+) + n H(+)(out). In terms of biological role, NDH shuttles electrons from NAD(P)H:plastoquinone, via FMN and iron-sulfur (Fe-S) centers, to quinones in the photosynthetic chain and possibly in a chloroplast respiratory chain. The immediate electron acceptor for the enzyme in this species is believed to be plastoquinone. Couples the redox reaction to proton translocation, and thus conserves the redox energy in a proton gradient. The protein is NAD(P)H-quinone oxidoreductase subunit I, chloroplastic of Jasminum nudiflorum (Winter jasmine).